The chain runs to 62 residues: Defensin BmKDfsin4 (62 aa).

A signal peptide spans 1-24 (MKTIVLLFVLALVFCTLEMGIVEA). Cystine bridges form between C28-C49, C35-C57, and C39-C59.

Belongs to the invertebrate defensin family. Type 2 subfamily.

It localises to the secreted. Functionally, dual-function peptide with antimicrobial and potassium channel-blocking activities. Shows inhibitory activity against Gram-positive bacteria such as S.aureus, B.subtilis, and M.luteus as well as methicillin-resistant S.aureus (MIC=0.1-20 uM). Does not act on bacteria by disrupting membranes. Also moderately inhibits Kv1.1/KCNA1 (25.2% inhibition at 1 uM), Kv1.2/KCNA2 (30.5% inhibition at 1 uM), and Kv1.3/KCNA3 potassium channels (IC(50)=510.2 nM, 61% inhibition at 1 uM). Inhibits potassium channels by interacting with the pore region. Does not show hemolytic activity. In vitro, dose-dependently decreases the production of Hepatitis B virus (HBV) DNA and HBV viral proteins in both culture medium and cell lysate. The sequence is that of Defensin BmKDfsin4 from Olivierus martensii (Manchurian scorpion).